The primary structure comprises 392 residues: Succinate--CoA ligase [ADP-forming] subunit beta (392 aa).

The region spanning 9-248 (KGILKQFGVA…ITEEDPLEYE (240 aa)) is the ATP-grasp domain. Residues K50, 57–59 (GRG), E103, M106, and E111 each bind ATP. 2 residues coordinate Mg(2+): N203 and D217. Substrate contacts are provided by residues N268 and 325 to 327 (GIV).

It belongs to the succinate/malate CoA ligase beta subunit family. As to quaternary structure, heterotetramer of two alpha and two beta subunits. Requires Mg(2+) as cofactor.

It catalyses the reaction succinate + ATP + CoA = succinyl-CoA + ADP + phosphate. The enzyme catalyses GTP + succinate + CoA = succinyl-CoA + GDP + phosphate. Its pathway is carbohydrate metabolism; tricarboxylic acid cycle; succinate from succinyl-CoA (ligase route): step 1/1. Succinyl-CoA synthetase functions in the citric acid cycle (TCA), coupling the hydrolysis of succinyl-CoA to the synthesis of either ATP or GTP and thus represents the only step of substrate-level phosphorylation in the TCA. The beta subunit provides nucleotide specificity of the enzyme and binds the substrate succinate, while the binding sites for coenzyme A and phosphate are found in the alpha subunit. This is Succinate--CoA ligase [ADP-forming] subunit beta from Chlorobaculum parvum (strain DSM 263 / NCIMB 8327) (Chlorobium vibrioforme subsp. thiosulfatophilum).